The sequence spans 428 residues: MPKDKPHVNIVFIGHVDHGKSTTIGRLLYDTGNIPEQIIKKFEEMGEKGKSFKFAWVMDRLKEERERGITIDVAHTKFETPHRYITIIDAPGHRDFVKNMITGASQADAAVLVVAATDGVMPQTKEHAFLARTLGIKHIIVAINKMDMVNYNQKRFEEVKAQVEKLLKMLGYKDFPVIPISAWEGENVVKKSDKMPWYNGPTLIEALDQIPEPEKPVDKPLRIPIQDVYSIKGVGTVPVGRVETGKLRVGEVVIFEPASTIFHKPIQGEVKSIEMHHEPLEEALPGDNIGFNVRGVSKNDIKRGDVAGHTTNPPTVVRTKDTFKAQIIVLNHPTAITVGYSPVLHAHTAQVPVRFEQLLAKLDPKTGNIVEENPQFIKTGDAAIVILRPMKPVVLEPVKEIPQLGRFAIRDMGMTIAAGMVISIQRGE.

A tr-type G domain is found at 5–217 (KPHVNIVFIG…DQIPEPEKPV (213 aa)). Positions 14 to 21 (GHVDHGKS) are G1. A GTP-binding site is contributed by 14–21 (GHVDHGKS). S21 contacts Mg(2+). The G2 stretch occupies residues 68 to 72 (GITID). The segment at 89–92 (DAPG) is G3. GTP is bound by residues 89 to 93 (DAPGH) and 144 to 147 (NKMD). Positions 144–147 (NKMD) are G4. Residues 181–183 (SAW) form a G5 region.

It belongs to the TRAFAC class translation factor GTPase superfamily. Classic translation factor GTPase family. EF-Tu/EF-1A subfamily.

The protein resides in the cytoplasm. The enzyme catalyses GTP + H2O = GDP + phosphate + H(+). GTP hydrolase that promotes the GTP-dependent binding of aminoacyl-tRNA to the A-site of ribosomes during protein biosynthesis. The chain is Elongation factor 1-alpha from Pyrococcus furiosus (strain ATCC 43587 / DSM 3638 / JCM 8422 / Vc1).